The primary structure comprises 534 residues: NEDD8-activating enzyme E1 regulatory subunit (534 aa).

A2 carries the post-translational modification N-acetylalanine. 2 positions are modified to N6-acetyllysine: K6 and K341. The interval 331 to 344 (DMIADSGKYIKLQN) is interaction with UBA3.

It belongs to the ubiquitin-activating E1 family. ULA1 subfamily. Heterodimer of UBA3 and NAE1. The complex binds NEDD8 and UBE2M. Binds APP and TP53BP2. Post-translationally, ubiquitinated by TRIP12, leading to its degradation by the proteasome. Ubiquitous in fetal tissues. Expressed throughout the adult brain.

The protein resides in the cell membrane. Its pathway is protein modification; protein neddylation. With respect to regulation, binding of TP53BP2 to the regulatory subunit NAE1 decreases neddylation activity. In terms of biological role, regulatory subunit of the dimeric UBA3-NAE1 E1 enzyme. E1 activates NEDD8 by first adenylating its C-terminal glycine residue with ATP, thereafter linking this residue to the side chain of the catalytic cysteine, yielding a NEDD8-UBA3 thioester and free AMP. E1 finally transfers NEDD8 to the catalytic cysteine of UBE2M. Necessary for cell cycle progression through the S-M checkpoint. Overexpression of NAE1 causes apoptosis through deregulation of NEDD8 conjugation. The covalent attachment of NEDD8 to target proteins is known as 'neddylation' and the process is involved in the regulation of cell growth, viability and development. This is NEDD8-activating enzyme E1 regulatory subunit (NAE1) from Homo sapiens (Human).